The primary structure comprises 286 residues: Phosphate import ATP-binding protein PstB (286 aa).

The ABC transporter domain occupies 40 to 281 (VVARDFSIYY…PKDSMTEDYI (242 aa)). Residue 72–79 (GPSGCGKS) participates in ATP binding.

This sequence belongs to the ABC transporter superfamily. Phosphate importer (TC 3.A.1.7) family. In terms of assembly, the complex is composed of two ATP-binding proteins (PstB), two transmembrane proteins (PstC and PstA) and a solute-binding protein (PstS).

Its subcellular location is the cell inner membrane. The catalysed reaction is phosphate(out) + ATP + H2O = ADP + 2 phosphate(in) + H(+). Its function is as follows. Part of the ABC transporter complex PstSACB involved in phosphate import. Responsible for energy coupling to the transport system. The sequence is that of Phosphate import ATP-binding protein PstB from Chlorobaculum tepidum (strain ATCC 49652 / DSM 12025 / NBRC 103806 / TLS) (Chlorobium tepidum).